We begin with the raw amino-acid sequence, 100 residues long: Large ribosomal subunit protein uL23 (100 aa).

The protein belongs to the universal ribosomal protein uL23 family. In terms of assembly, part of the 50S ribosomal subunit. Contacts protein L29, and trigger factor when it is bound to the ribosome.

Functionally, one of the early assembly proteins it binds 23S rRNA. One of the proteins that surrounds the polypeptide exit tunnel on the outside of the ribosome. Forms the main docking site for trigger factor binding to the ribosome. The protein is Large ribosomal subunit protein uL23 of Buchnera aphidicola subsp. Schizaphis graminum (strain Sg).